A 103-amino-acid polypeptide reads, in one-letter code: ATP synthase subunit c (103 aa).

Helical transmembrane passes span 3-23 (FLAL…VSGL), 30-50 (SIAG…IGMG), and 74-94 (MFIA…LALI).

This sequence belongs to the ATPase C chain family. F-type ATPases have 2 components, F(1) - the catalytic core - and F(0) - the membrane proton channel. F(1) has five subunits: alpha(3), beta(3), gamma(1), delta(1), epsilon(1). F(0) has three main subunits: a(1), b(2) and c(10-14). The alpha and beta chains form an alternating ring which encloses part of the gamma chain. F(1) is attached to F(0) by a central stalk formed by the gamma and epsilon chains, while a peripheral stalk is formed by the delta and b chains.

The protein localises to the cell inner membrane. Its function is as follows. F(1)F(0) ATP synthase produces ATP from ADP in the presence of a proton or sodium gradient. F-type ATPases consist of two structural domains, F(1) containing the extramembraneous catalytic core and F(0) containing the membrane proton channel, linked together by a central stalk and a peripheral stalk. During catalysis, ATP synthesis in the catalytic domain of F(1) is coupled via a rotary mechanism of the central stalk subunits to proton translocation. Functionally, key component of the F(0) channel; it plays a direct role in translocation across the membrane. A homomeric c-ring of between 10-14 subunits forms the central stalk rotor element with the F(1) delta and epsilon subunits. The polypeptide is ATP synthase subunit c (Helicobacter hepaticus (strain ATCC 51449 / 3B1)).